The chain runs to 239 residues: Endolytic peptidoglycan transglycosylase RlpA (239 aa).

The signal sequence occupies residues 1 to 25 (MTLTRKTLFLLTAAFGIHSFQTASA). The SPOR domain occupies 160–239 (VAENKDIFID…GMVRAVLTAG (80 aa)).

It belongs to the RlpA family.

Its function is as follows. Lytic transglycosylase with a strong preference for naked glycan strands that lack stem peptides. In Neisseria meningitidis serogroup A / serotype 4A (strain DSM 15465 / Z2491), this protein is Endolytic peptidoglycan transglycosylase RlpA.